The primary structure comprises 259 residues: 3-oxo-5-alpha-steroid 4-dehydrogenase 1 (259 aa).

The next 5 helical transmembrane spans lie at 12-29, 86-106, 111-131, 151-171, and 209-229; these read LLAA…AVFA, ILLA…PFLM, PMPL…GYLQ, FLIG…SDHI, and YALA…FCFL.

Belongs to the steroid 5-alpha reductase family. As to expression, liver and prostate (at a low level).

The protein resides in the microsome membrane. Its subcellular location is the endoplasmic reticulum membrane. It carries out the reaction a 3-oxo-5alpha-steroid + NADP(+) = a 3-oxo-Delta(4)-steroid + NADPH + H(+). The enzyme catalyses androst-4-ene-3,17-dione + NADPH + H(+) = 5alpha-androstan-3,17-dione + NADP(+). The catalysed reaction is 5alpha-pregnane-3,20-dione + NADP(+) = progesterone + NADPH + H(+). It catalyses the reaction 17beta-hydroxy-5alpha-androstan-3-one + NADP(+) = testosterone + NADPH + H(+). Its function is as follows. Converts testosterone into 5-alpha-dihydrotestosterone and progesterone or corticosterone into their corresponding 5-alpha-3-oxosteroids. It plays a central role in sexual differentiation and androgen physiology. The polypeptide is 3-oxo-5-alpha-steroid 4-dehydrogenase 1 (Homo sapiens (Human)).